Here is a 147-residue protein sequence, read N- to C-terminus: MRTYTPKPGDINRQWHVIDATDVVLGRLASQTATLLRGKHKPTFASHMDMGDFVIIINAEKVALTGAKLEQKRAYRHSGYPGGLTSVNYAELLESNPVRAVEKAIKGMLPKNSLAAQQLGKLKVYAGPEHPHAAQQPKTFEITQVAQ.

This sequence belongs to the universal ribosomal protein uL13 family. Part of the 50S ribosomal subunit.

In terms of biological role, this protein is one of the early assembly proteins of the 50S ribosomal subunit, although it is not seen to bind rRNA by itself. It is important during the early stages of 50S assembly. The polypeptide is Large ribosomal subunit protein uL13 (Paenarthrobacter aurescens (strain TC1)).